Reading from the N-terminus, the 203-residue chain is ATP-dependent Clp protease proteolytic subunit (203 aa).

The Nucleophile role is filled by S107. H132 is a catalytic residue.

This sequence belongs to the peptidase S14 family. In terms of assembly, fourteen ClpP subunits assemble into 2 heptameric rings which stack back to back to give a disk-like structure with a central cavity, resembling the structure of eukaryotic proteasomes.

It localises to the cytoplasm. It catalyses the reaction Hydrolysis of proteins to small peptides in the presence of ATP and magnesium. alpha-casein is the usual test substrate. In the absence of ATP, only oligopeptides shorter than five residues are hydrolyzed (such as succinyl-Leu-Tyr-|-NHMec, and Leu-Tyr-Leu-|-Tyr-Trp, in which cleavage of the -Tyr-|-Leu- and -Tyr-|-Trp bonds also occurs).. Functionally, cleaves peptides in various proteins in a process that requires ATP hydrolysis. Has a chymotrypsin-like activity. Plays a major role in the degradation of misfolded proteins. The protein is ATP-dependent Clp protease proteolytic subunit of Pelagibacter ubique (strain HTCC1062).